The following is a 652-amino-acid chain: UvrABC system protein C (652 aa).

The 78-residue stretch at lysine 19–isoleucine 96 folds into the GIY-YIG domain. Residues glutamate 203–leucine 238 form the UVR domain.

This sequence belongs to the UvrC family. In terms of assembly, interacts with UvrB in an incision complex.

The protein resides in the cytoplasm. In terms of biological role, the UvrABC repair system catalyzes the recognition and processing of DNA lesions. UvrC both incises the 5' and 3' sides of the lesion. The N-terminal half is responsible for the 3' incision and the C-terminal half is responsible for the 5' incision. This chain is UvrABC system protein C, found in Treponema denticola (strain ATCC 35405 / DSM 14222 / CIP 103919 / JCM 8153 / KCTC 15104).